Here is a 152-residue protein sequence, read N- to C-terminus: Desiccation protectant protein Lea14 homolog (152 aa).

This sequence belongs to the LEA type 2 family.

In Glycine max (Soybean), this protein is Desiccation protectant protein Lea14 homolog.